Here is a 455-residue protein sequence, read N- to C-terminus: Tubby-like F-box protein 1 (455 aa).

The region spanning 54 to 112 is the F-box domain; that stretch reads ETPWANLPPELLRDVIKRLEESESVWPARRHVVACASVCRSWRDMCKEIVQSPELSGKI. A disordered region spans residues 386–414; sequence QPQPQPQPQPQPQPLTQPQPSGQTDGPDK. Pro residues predominate over residues 388–402; that stretch reads QPQPQPQPQPQPLTQ.

The protein belongs to the TUB family. As to expression, ubiquitous.

In Arabidopsis thaliana (Mouse-ear cress), this protein is Tubby-like F-box protein 1.